Reading from the N-terminus, the 555-residue chain is Potassium-transporting ATPase potassium-binding subunit (555 aa).

The next 10 membrane-spanning stretches (helical) occupy residues 2–22 (IWVA…PTGI), 60–80 (QYAL…YFIF), 130–150 (IGIT…VMAF), 173–193 (VFLP…VPQT), 246–266 (MSNI…PFTY), 278–298 (ILFV…TTSE), 374–394 (AGFV…GLMV), 412–432 (LIAV…ALAL), 483–503 (LVMF…AASL), and 525–545 (GIFI…MLVL).

Belongs to the KdpA family. The system is composed of three essential subunits: KdpA, KdpB and KdpC.

Its subcellular location is the cell membrane. Functionally, part of the high-affinity ATP-driven potassium transport (or Kdp) system, which catalyzes the hydrolysis of ATP coupled with the electrogenic transport of potassium into the cytoplasm. This subunit binds the extracellular potassium ions and delivers the ions to the membrane domain of KdpB through an intramembrane tunnel. The chain is Potassium-transporting ATPase potassium-binding subunit from Bacillus anthracis (strain A0248).